A 1033-amino-acid chain; its full sequence is PDZ domain-containing protein 7 (1033 aa).

PDZ domains follow at residues 86 to 168 (SVRV…RMGR) and 210 to 293 (IVHL…ETGR). Residues 323–344 (ESSSSVSSCASSAPYSSGSLPS) are compositionally biased toward low complexity. Disordered regions lie at residues 323-380 (ESSS…GGRV), 444-464 (KQQR…LQRS), 754-864 (EPLS…KTVT), and 943-1033 (MELV…PRIP). Basic residues predominate over residues 770–784 (AQSRSRSRSRSRSRS). Residues 785–797 (SRGQGKSPGRRSP) show a composition bias toward low complexity. The 73-residue stretch at 862–934 (TVTLSKMKQS…QRAVDTIRRA (73 aa)) folds into the PDZ 3 domain. Residues 991-1000 (PEPPTNPQTP) are compositionally biased toward pro residues.

In terms of assembly, homodimerizes (via PDZ2 domain). Component of USH2 complex, composed of ADGRV1, PDZD7, USH2A and WHRN. Interacts (via PDZ domains) with WHRN; the interaction is direct. Interacts with USH1G. Interacts with ADGRV1 (via the cytoplasmic region). Interacts with USH2A (via the cytoplasmic region). Interacts with MYO7A (via MyTH4-FERM domains). In terms of tissue distribution, weakly expressed in the inner ear. Expressed in the retinal pigment epithelium.

It localises to the cell projection. It is found in the cilium. The protein localises to the nucleus. The protein resides in the stereocilium. In terms of biological role, in cochlear developing hair cells, essential in organizing the USH2 complex at stereocilia ankle links. Blocks inhibition of adenylate cyclase activity mediated by ADGRV1. The chain is PDZ domain-containing protein 7 from Homo sapiens (Human).